The primary structure comprises 527 residues: Peptide chain release factor 3 (527 aa).

The region spanning 11–278 (AKRRTFAIIS…GFVEWAPAPL (268 aa)) is the tr-type G domain. GTP contacts are provided by residues 20–27 (SHPDAGKT), 87–91 (DTPGH), and 141–144 (NKMD).

The protein belongs to the TRAFAC class translation factor GTPase superfamily. Classic translation factor GTPase family. PrfC subfamily.

It localises to the cytoplasm. Functionally, increases the formation of ribosomal termination complexes and stimulates activities of RF-1 and RF-2. It binds guanine nucleotides and has strong preference for UGA stop codons. It may interact directly with the ribosome. The stimulation of RF-1 and RF-2 is significantly reduced by GTP and GDP, but not by GMP. The polypeptide is Peptide chain release factor 3 (Teredinibacter turnerae (strain ATCC 39867 / T7901)).